Consider the following 637-residue polypeptide: Probable potassium transport system protein Kup 2 (637 aa).

Residues 1 to 21 (MDLASRDSEAETVEQSSHSGA) form a disordered region. 12 helical membrane-spanning segments follow: residues 29-49 (LMLG…IYAF), 68-88 (VLSL…VAFV), 116-136 (LILA…IITP), 150-170 (VTPT…AILF), 180-200 (VAAV…VAGL), 228-248 (AAFV…ALYV), 258-278 (IVLA…FGQG), 300-320 (ALMP…QAVI), 359-379 (LLVA…SSLA), 381-401 (AYGI…FVVM), 409-429 (LAVA…FFLA), and 434-454 (IFEG…IMWT).

The protein belongs to the HAK/KUP transporter (TC 2.A.72) family.

Its subcellular location is the cell inner membrane. The catalysed reaction is K(+)(in) + H(+)(in) = K(+)(out) + H(+)(out). Its function is as follows. Transport of potassium into the cell. Likely operates as a K(+):H(+) symporter. The sequence is that of Probable potassium transport system protein Kup 2 from Mesorhizobium japonicum (strain LMG 29417 / CECT 9101 / MAFF 303099) (Mesorhizobium loti (strain MAFF 303099)).